An 81-amino-acid chain; its full sequence is Putative membrane protein insertion efficiency factor (81 aa).

The protein belongs to the UPF0161 family.

The protein resides in the cell inner membrane. Functionally, could be involved in insertion of integral membrane proteins into the membrane. This is Putative membrane protein insertion efficiency factor from Pseudomonas syringae pv. tomato (strain ATCC BAA-871 / DC3000).